We begin with the raw amino-acid sequence, 450 residues long: MSGHGTPIPMTSRRASPLKGEAHVPGDKSISHRSLILGAMAVGETKISGLLEGEDVLDTAKAMQAFGAEVVNHGGGEWSVFGVGVGGFAEPENVIDCGNSGTGVRLIMGAMATSPITATFTGDASLNKRPMARVTDPLALFGAQSVGREGGRLPMTIVGAAEPVPVRYEVPVPSAQVKSAVLLAGLNAPGKTVVIEREATRDHSERMLAGFGAEITVEDTKEGRVITLTGQPELKPQVIAVPRDPSSAAFPVCAALITPGSDVLVPGIGLNPTRAGLFYTLQDMGADLTFENPRTEGGEPVADLRAKYSPDMKGIEVPPERAASMIDEYPVLSVVASFATGTTMMAGVKELRVKESDRIDAMAKGLRANGVTVEEGEDWWSVEGCGPEGVKGGGTAESFLDHRIAMSFMVMGMGAQNPVSVDDGSPIATSFPIFERLMGDLGASIIRTDG.

Positions 1–26 are disordered; that stretch reads MSGHGTPIPMTSRRASPLKGEAHVPG. Residues lysine 28, serine 29, and arginine 33 each coordinate 3-phosphoshikimate. A phosphoenolpyruvate-binding site is contributed by lysine 28. Phosphoenolpyruvate is bound by residues glycine 101 and arginine 129. 4 residues coordinate 3-phosphoshikimate: serine 174, glutamine 176, aspartate 327, and lysine 354. A phosphoenolpyruvate-binding site is contributed by glutamine 176. Aspartate 327 serves as the catalytic Proton acceptor. 2 residues coordinate phosphoenolpyruvate: arginine 358 and arginine 403.

This sequence belongs to the EPSP synthase family. Monomer.

It localises to the cytoplasm. It catalyses the reaction 3-phosphoshikimate + phosphoenolpyruvate = 5-O-(1-carboxyvinyl)-3-phosphoshikimate + phosphate. Its pathway is metabolic intermediate biosynthesis; chorismate biosynthesis; chorismate from D-erythrose 4-phosphate and phosphoenolpyruvate: step 6/7. Functionally, catalyzes the transfer of the enolpyruvyl moiety of phosphoenolpyruvate (PEP) to the 5-hydroxyl of shikimate-3-phosphate (S3P) to produce enolpyruvyl shikimate-3-phosphate and inorganic phosphate. The chain is 3-phosphoshikimate 1-carboxyvinyltransferase from Ruegeria sp. (strain TM1040) (Silicibacter sp.).